Here is a 328-residue protein sequence, read N- to C-terminus: DNA-directed RNA polymerase subunit alpha (328 aa).

Residues 1 to 232 are alpha N-terminal domain (alpha-NTD); the sequence is MSTQGFLKPR…DQISVFAALE (232 aa). Positions 248 to 328 are alpha C-terminal domain (alpha-CTD); that stretch reads IDPVLLRPVD…NWPPLGLERP (81 aa).

This sequence belongs to the RNA polymerase alpha chain family. As to quaternary structure, homodimer. The RNAP catalytic core consists of 2 alpha, 1 beta, 1 beta' and 1 omega subunit. When a sigma factor is associated with the core the holoenzyme is formed, which can initiate transcription.

It catalyses the reaction RNA(n) + a ribonucleoside 5'-triphosphate = RNA(n+1) + diphosphate. DNA-dependent RNA polymerase catalyzes the transcription of DNA into RNA using the four ribonucleoside triphosphates as substrates. In Bordetella avium (strain 197N), this protein is DNA-directed RNA polymerase subunit alpha.